We begin with the raw amino-acid sequence, 207 residues long: Neuroendocrine protein 7B2 (207 aa).

Residues 1 to 22 (MVSTMLSGLVLWLTFGWTPALA) form the signal peptide. Cys116 and Cys125 are disulfide-bonded. Ser136 and Ser200 each carry phosphoserine. Positions 168–207 (KGGQRRKRRSVNPYLQGQRLDNVVAKKSVPHFSDEDKDPE) are disordered.

The protein belongs to the 7B2 family. In terms of assembly, interacts with PCSK2/PC2 early in the secretory pathway. Dissociation occurs at later stages. Proteolytically cleaved in the Golgi by a furin-like convertase to generate bioactive peptides. Post-translationally, sulfated on tyrosine residues.

It is found in the secreted. Its function is as follows. Acts as a molecular chaperone for PCSK2/PC2, preventing its premature activation in the regulated secretory pathway. Binds to inactive PCSK2 in the endoplasmic reticulum and facilitates its transport from there to later compartments of the secretory pathway where it is proteolytically matured and activated. Also required for cleavage of PCSK2 but does not appear to be involved in its folding. Plays a role in regulating pituitary hormone secretion. The C-terminal peptide inhibits PCSK2 in vitro. This is Neuroendocrine protein 7B2 (SCG5) from Sus scrofa (Pig).